Here is a 445-residue protein sequence, read N- to C-terminus: Tubulin beta-1 chain (445 aa).

8 residues coordinate GTP: glutamine 11, glutamate 69, serine 138, glycine 142, threonine 143, glycine 144, asparagine 204, and asparagine 226. Glutamate 69 provides a ligand contact to Mg(2+). The segment at 426–445 (QDATAEDEEEYEDEEEEMAA) is disordered. The span at 429-445 (TAEDEEEYEDEEEEMAA) shows a compositional bias: acidic residues.

The protein belongs to the tubulin family. As to quaternary structure, dimer of alpha and beta chains. A typical microtubule is a hollow water-filled tube with an outer diameter of 25 nm and an inner diameter of 15 nM. Alpha-beta heterodimers associate head-to-tail to form protofilaments running lengthwise along the microtubule wall with the beta-tubulin subunit facing the microtubule plus end conferring a structural polarity. Microtubules usually have 13 protofilaments but different protofilament numbers can be found in some organisms and specialized cells. It depends on Mg(2+) as a cofactor.

It is found in the cytoplasm. It localises to the cytoskeleton. Its function is as follows. Tubulin is the major constituent of microtubules, a cylinder consisting of laterally associated linear protofilaments composed of alpha- and beta-tubulin heterodimers. Microtubules grow by the addition of GTP-tubulin dimers to the microtubule end, where a stabilizing cap forms. Below the cap, tubulin dimers are in GDP-bound state, owing to GTPase activity of alpha-tubulin. This is Tubulin beta-1 chain (TUBB1) from Eleusine indica (Goosegrass).